A 268-amino-acid chain; its full sequence is Tryptophan synthase alpha chain (268 aa).

Residues E49 and D60 each act as proton acceptor in the active site.

It belongs to the TrpA family. As to quaternary structure, tetramer of two alpha and two beta chains.

The catalysed reaction is (1S,2R)-1-C-(indol-3-yl)glycerol 3-phosphate + L-serine = D-glyceraldehyde 3-phosphate + L-tryptophan + H2O. It functions in the pathway amino-acid biosynthesis; L-tryptophan biosynthesis; L-tryptophan from chorismate: step 5/5. The alpha subunit is responsible for the aldol cleavage of indoleglycerol phosphate to indole and glyceraldehyde 3-phosphate. In Xanthomonas axonopodis pv. citri (strain 306), this protein is Tryptophan synthase alpha chain.